We begin with the raw amino-acid sequence, 99 residues long: Aspartyl/glutamyl-tRNA(Asn/Gln) amidotransferase subunit C (99 aa).

This sequence belongs to the GatC family. Heterotrimer of A, B and C subunits.

The enzyme catalyses L-glutamyl-tRNA(Gln) + L-glutamine + ATP + H2O = L-glutaminyl-tRNA(Gln) + L-glutamate + ADP + phosphate + H(+). The catalysed reaction is L-aspartyl-tRNA(Asn) + L-glutamine + ATP + H2O = L-asparaginyl-tRNA(Asn) + L-glutamate + ADP + phosphate + 2 H(+). Allows the formation of correctly charged Asn-tRNA(Asn) or Gln-tRNA(Gln) through the transamidation of misacylated Asp-tRNA(Asn) or Glu-tRNA(Gln) in organisms which lack either or both of asparaginyl-tRNA or glutaminyl-tRNA synthetases. The reaction takes place in the presence of glutamine and ATP through an activated phospho-Asp-tRNA(Asn) or phospho-Glu-tRNA(Gln). In Corynebacterium diphtheriae (strain ATCC 700971 / NCTC 13129 / Biotype gravis), this protein is Aspartyl/glutamyl-tRNA(Asn/Gln) amidotransferase subunit C.